Reading from the N-terminus, the 260-residue chain is Ribonuclease HII (260 aa).

One can recognise an RNase H type-2 domain in the interval 73–260 (LHIAGIDEAG…APVQQQLDIV (188 aa)). A divalent metal cation-binding residues include D79, E80, and D171.

It belongs to the RNase HII family. It depends on Mn(2+) as a cofactor. Mg(2+) serves as cofactor.

The protein resides in the cytoplasm. It catalyses the reaction Endonucleolytic cleavage to 5'-phosphomonoester.. Its function is as follows. Endonuclease that specifically degrades the RNA of RNA-DNA hybrids. The polypeptide is Ribonuclease HII (Desulfitobacterium hafniense (strain Y51)).